A 64-amino-acid chain; its full sequence is Prokaryotic ubiquitin-like protein Pup (64 aa).

The interval 1 to 37 (MAQEQTKRGGGGGEDDDLSGGAGAGQERREKLAEETD) is disordered. The segment at 21-58 (GAGAGQERREKLAEETDDLLDEIDDVLEENAEDFVRAY) is ARC ATPase binding. Positions 24–52 (AGQERREKLAEETDDLLDEIDDVLEENAE) form a coiled coil. A Deamidated glutamine modification is found at Q64. Residue Q64 forms an Isoglutamyl lysine isopeptide (Gln-Lys) (interchain with K-? in acceptor proteins) linkage.

Belongs to the prokaryotic ubiquitin-like protein family. Strongly interacts with the proteasome-associated ATPase ARC through a hydrophobic interface; the interacting region of Pup lies in its C-terminal half. There is one Pup binding site per ARC hexamer ring. Post-translationally, is modified by deamidation of its C-terminal glutamine to glutamate by the deamidase Dop, a prerequisite to the subsequent pupylation process.

It functions in the pathway protein degradation; proteasomal Pup-dependent pathway. Its function is as follows. Protein modifier that is covalently attached to lysine residues of substrate proteins, thereby targeting them for proteasomal degradation. The tagging system is termed pupylation. This chain is Prokaryotic ubiquitin-like protein Pup, found in Mycobacterium sp. (strain JLS).